The primary structure comprises 380 residues: Putative 8-amino-7-oxononanoate synthase (380 aa).

Position 22 (Arg22) interacts with substrate. 109–110 serves as a coordination point for pyridoxal 5'-phosphate; that stretch reads GY. His134 is a binding site for substrate. Pyridoxal 5'-phosphate is bound by residues Ser182, 207–210, and 238–241; these read DEAH and TLSK. N6-(pyridoxal phosphate)lysine is present on Lys241. Thr353 serves as a coordination point for substrate.

Belongs to the class-II pyridoxal-phosphate-dependent aminotransferase family. BioF subfamily. In terms of assembly, homodimer. Requires pyridoxal 5'-phosphate as cofactor.

It catalyses the reaction 6-carboxyhexanoyl-[ACP] + L-alanine + H(+) = (8S)-8-amino-7-oxononanoate + holo-[ACP] + CO2. It functions in the pathway cofactor biosynthesis; biotin biosynthesis. In terms of biological role, catalyzes the decarboxylative condensation of pimeloyl-[acyl-carrier protein] and L-alanine to produce 8-amino-7-oxononanoate (AON), [acyl-carrier protein], and carbon dioxide. This is Putative 8-amino-7-oxononanoate synthase (bioF) from Gloeothece citriformis (strain PCC 7424) (Cyanothece sp. (strain PCC 7424)).